The primary structure comprises 269 residues: Zinc transporter ZupT (269 aa).

Helical transmembrane passes span 12–32 (AFSI…LVMF), 41–61 (LSFG…TEIF), 75–95 (DHAF…IALI), 126–146 (MMAA…TFFA), 152–172 (AVGM…GISI), 187–207 (VWAC…GYLV), 211–231 (FLSP…MVFL), and 249–269 (TVYG…LFHF). The Fe(2+) site is built by N136 and E139. 2 residues coordinate Zn(2+): E139 and H164. Fe(2+) contacts are provided by N165, E168, and E197. E168 serves as a coordination point for Zn(2+).

It belongs to the ZIP transporter (TC 2.A.5) family. ZupT subfamily.

The protein resides in the cell inner membrane. It carries out the reaction Zn(2+)(in) = Zn(2+)(out). Functionally, mediates zinc uptake. May also transport other divalent cations. The protein is Zinc transporter ZupT of Neisseria meningitidis serogroup B (strain ATCC BAA-335 / MC58).